The chain runs to 126 residues: MSWQTYVDTNLVGTGAVTQAAILGLDGNTWATSAGFAVTPAQGTTLAGAFNNADAIRAGGFDLAGVHYVTLRADDRSIYGKKGAAGVITVKTSKAILVGVYNEKIQPGTAANVVEKLADYLIGQGF.

The segment at 2-36 (SWQTYVDTNLVGTGAVTQAAILGLDGNTWATSAGF) is actin binding. Lys104 is modified (N6,N6,N6-trimethyllysine).

The protein belongs to the profilin family. As to quaternary structure, occurs in many kinds of cells as a complex with monomeric actin in a 1:1 ratio.

The protein resides in the cytoplasm. It is found in the cytoskeleton. Functionally, binds to actin and affects the structure of the cytoskeleton. At high concentrations, profilin prevents the polymerization of actin, whereas it enhances it at low concentrations. By binding to PIP2, it inhibits the formation of IP3 and DG. The protein is Profilin-1B of Acanthamoeba castellanii (Amoeba).